We begin with the raw amino-acid sequence, 1444 residues long: DNA polymerase III PolC-type (1444 aa).

Residues 196–218 (EAVQVMQKRQAEGQNGNSSAAPL) are disordered. The span at 207–216 (EGQNGNSSAA) shows a compositional bias: polar residues. The 157-residue stretch at 428 to 584 (YCVFDVETTG…FDAEATAYLA (157 aa)) folds into the Exonuclease domain.

It belongs to the DNA polymerase type-C family. PolC subfamily.

It is found in the cytoplasm. The catalysed reaction is DNA(n) + a 2'-deoxyribonucleoside 5'-triphosphate = DNA(n+1) + diphosphate. Required for replicative DNA synthesis. This DNA polymerase also exhibits 3' to 5' exonuclease activity. This chain is DNA polymerase III PolC-type, found in Listeria welshimeri serovar 6b (strain ATCC 35897 / DSM 20650 / CCUG 15529 / CIP 8149 / NCTC 11857 / SLCC 5334 / V8).